The following is a 95-amino-acid chain: Translation initiation factor 1A (95 aa).

Positions Ser-6 to Glu-80 constitute an S1-like domain.

This sequence belongs to the eIF-1A family.

Functionally, seems to be required for maximal rate of protein biosynthesis. Enhances ribosome dissociation into subunits and stabilizes the binding of the initiator Met-tRNA(I) to 40 S ribosomal subunits. In Haloarcula marismortui (strain ATCC 43049 / DSM 3752 / JCM 8966 / VKM B-1809) (Halobacterium marismortui), this protein is Translation initiation factor 1A.